The following is a 361-amino-acid chain: Free fatty acid receptor 4 (361 aa).

Residues 1–21 (MSPECAQTTGPGPSRTPDQVN) form a disordered region. Topologically, residues 1–45 (MSPECAQTTGPGPSRTPDQVNRTHFPFFSDVKGDHRLVLSVLETT) are extracellular. An N-linked (GlcNAc...) asparagine glycan is attached at asparagine 21. A helical membrane pass occupies residues 46–66 (VLGLIFVVSLLGNVCALVLVV). Over 67–77 (RRRRRGATVSL) the chain is Cytoplasmic. Residues 78 to 98 (VLNLFCADLLFTSAIPLVLVV) form a helical membrane-spanning segment. Over 99–103 (RWTEA) the chain is Extracellular. A helical transmembrane segment spans residues 104-124 (WLLGPVVCHLLFYVMTMSGSV). An intrachain disulfide couples cysteine 111 to cysteine 194. Residues 125 to 156 (TILTLAAVSLERMVCIVRLRRGLSGPGRRTQA) are Cytoplasmic-facing. Residues 157-177 (ALLAFIWGYSALAALPLCILF) form a helical membrane-spanning segment. The Extracellular segment spans residues 178 to 204 (RVVPQRLPGGDQEIPICTLDWPNRIGE). A helical membrane pass occupies residues 205–225 (ISWDVFFVTLNFLVPGLVIVI). At 226-268 (SYSKILQITKASRKRLTLSLAYSESHQIRVSQQDYRLFRTLFL) the chain is on the cytoplasmic side. A helical membrane pass occupies residues 269–289 (LMVSFFIMWSPIIITILLILI). Topologically, residues 290–295 (QNFRQD) are extracellular. The chain crosses the membrane as a helical span at residues 296–316 (LVIWPSLFFWVVAFTFANSAL). The Cytoplasmic portion of the chain corresponds to 317 to 361 (NPILYNMSLFRSEWRKIFCCFFFPEKGAIFTETSIRRNDLSVIST). 2 positions are modified to phosphothreonine: threonine 347 and threonine 349. Phosphoserine is present on residues serine 350, serine 357, and serine 360.

It belongs to the G-protein coupled receptor 1 family. In terms of assembly, interacts (via C-terminus) with ARRB2 following LCFAs stimulation. Phosphorylated at two clusters of Ser and Thr residues located in the intracellular C-terminus. Prerequisite for FFAR4 internalization via an ARRB2-dependent pathway.

Its subcellular location is the cell membrane. The protein localises to the endosome membrane. It localises to the lysosome membrane. It is found in the cell projection. The protein resides in the cilium membrane. Its function is as follows. G-protein-coupled receptor for long-chain fatty acids (LCFAs) with a major role in adipogenesis, energy metabolism and inflammation. Signals via G-protein and beta-arrestin pathways. LCFAs sensing initiates activation of phosphoinositidase C-linked G proteins GNAQ and GNA11 (G(q)/G(11)), inducing a variety of cellular responses via second messenger pathways such as intracellular calcium mobilization, modulation of cyclic adenosine monophosphate (cAMP) production, and mitogen-activated protein kinases (MAPKs). After LCFAs binding, associates with beta-arrestin ARRB2 that acts as an adapter protein coupling the receptor to specific downstream signaling pathways, as well as mediating receptor endocytosis. In response to dietary fats, plays an important role in the regulation of adipocyte proliferation and differentiation. Acts as a receptor for omega-3 polyunsaturated fatty acids (PUFAs) at primary cilium of perivascular preadipocytes, initiating an adipogenic program via cAMP and CTCF-dependent chromatin remodeling that ultimately results in transcriptional activation of adipogenic genes and cell cycle entry. Induces differentiation of brown and beige adipocytes probably via autocrine and endocrine functions of FGF21 hormone. Contributes to the thermogenic activation of brown adipose tissue and the browning of white adipose tissue. Activates brown adipocytes by initiating intracellular calcium signaling leading to mitochondrial depolarization and fission, and overall increased mitochondrial respiration. Consequently stimulates fatty acid uptake and oxidation in mitochondria together with UCP1-mediated thermogenic respiration, eventually reducing fat mass. Regulates bi-potential differentiation of bone marrow mesenchymal stem cells toward osteoblasts or adipocytes likely by up-regulating distinct integrins. In response to dietary fats regulates hormone secretion and appetite. Stimulates GIP and GLP1 secretion from enteroendocrine cells as well as GCG secretion in pancreatic alpha cells, thereby playing a role in the regulation of blood glucose levels. Negatively regulates glucose-induced SST secretion in pancreatic delta cells. Mediates LCFAs inhibition of GHRL secretion, an appetite-controlling hormone. In taste buds, contributes to sensing of dietary fatty acids by the gustatory system. During the inflammatory response, promotes anti-inflammatory M2 macrophage differentiation in adipose tissue. Mediates the anti-inflammatory effects of omega-3 PUFAs via inhibition of NLRP3 inflammasome activation. In this pathway, interacts with adapter protein ARRB2 and inhibits the priming step triggered by Toll-like receptors (TLRs) at the level of TAK1 and TAB1. Further inhibits the activation step when ARRB2 directly associates with NLRP3, leading to inhibition of pro-inflammatory cytokine release. Mediates LCFAs anti-apoptotic effects. This Rattus norvegicus (Rat) protein is Free fatty acid receptor 4 (Ffar4).